Consider the following 346-residue polypeptide: Dehydrogenase azaJ (346 aa).

Residue 43–48 (VDYATQ) coordinates NADP(+). 133 to 140 (LAFSTAIV) contributes to the substrate binding site. NADP(+)-binding positions include 170–173 (ATSV), 193–196 (SPHN), tyrosine 211, and 251–252 (LN). 269–273 (APPNV) contributes to the substrate binding site. 336 to 337 (VS) is an NADP(+) binding site.

The protein belongs to the zinc-containing alcohol dehydrogenase family.

It functions in the pathway secondary metabolite biosynthesis. Its function is as follows. Dehydrogenase; part of the gene cluster that mediates the biosynthesis of azaphilones, a class of fungal metabolites characterized by a highly oxygenated pyrano-quinone bicyclic core and exhibiting a broad range of bioactivities. In the first step, the non-reducing polyketide synthase azaA forms the hexaketide precursor from successive condensations of five malonyl-CoA units, presumably with a simple acetyl-CoA starter unit. The reactive polyketide chain then undergoes a PT-mediated C2-C7 cyclization to afford the aromatic ring and is eventually released as an aldehyde through the R-domain. The putative ketoreductase azaE is proposed to catalyze the reduction of the terminal ketone resulting in the early culture product FK17-P2a. The monooxygenase azaH was demonstrated to be the only enzyme required to convert FK17-P2a to azanigerone E. AzaH first hydroxylates the benzaldehyde intermediate FK17-P2a at C4, which triggers the formation of the pyran-ring to afford azanigerone E. In parallel, the 2,4-dimethylhexanoyl chain is synthesized by the HR-PKS azaB and is proposed to be transferred to the C4-hydroxyl of azanigerone E by the acyltransferase azaD directly from the ACP domain of azaB. Alternatively, the 2,4-dimethyl-hexanoyl chain may be offloaded from the HR-PKS as a carboxylic acid and converted to an acyl-CoA by azaF. The resulting acyl-CoA molecule could then be taken up as a substrate by AzaD to form azanigerone B. To yield the carboxylic acid substituent in azanigerone A, the hydroxypropyl side chain of azanigerone B would need to undergo a C-C oxidative cleavage catalyzed by cytochrome P450 AzaI. AzaI is proposed to act on a vicinal diol that leads to a C-C bond scission either through an alkoxyradical intermediate or a peroxy complex. In the biosynthesis of azanigerone A, azanigerone B first undergoes hydroxylation at C10, possibly catalyzed by one of the two FAD-dependent monooxygenases encoded in the cluster, azaG or azaL, resulting in the vicinal diol azanigerone C. Oxidative cleavage of azanigerone C by azaI would yield the corresponding aldehyde derivative of azanigerone A. Finally, the dehydrogenase azaJ is proposed to convert the aldehyde functional group into the carboxylic acid, completing the conversion from azanigerone B to azanigerone A. Alternatively, the oxidation of aldehyde to carboxylic acid may be catalyzed by the same P450 enzyme azaI via consecutive oxidation or by endogenous alcohol dehydrogenase. The chain is Dehydrogenase azaJ from Aspergillus niger (strain ATCC 1015 / CBS 113.46 / FGSC A1144 / LSHB Ac4 / NCTC 3858a / NRRL 328 / USDA 3528.7).